Consider the following 743-residue polypeptide: Tudor domain-containing protein 3 (743 aa).

Positions Lys-241–Arg-262 are disordered. One can recognise a UBA domain in the interval Leu-286–Ser-326. Disordered stretches follow at residues Ser-327–Thr-365 and Glu-380–Arg-549. A Phosphoserine modification is found at Ser-349. Positions Pro-414–Lys-431 are enriched in basic and acidic residues. Over residues Asp-432–Leu-445 the composition is skewed to polar residues. A Phosphoserine modification is found at Ser-438. Basic and acidic residues-rich tracts occupy residues Ala-464–Ser-484 and Arg-536–Arg-549. Lys-563 participates in a covalent cross-link: Glycyl lysine isopeptide (Lys-Gly) (interchain with G-Cter in SUMO2). A disordered region spans residues Thr-572–Lys-603. Positions Val-647–Glu-707 constitute a Tudor domain. A compositionally biased stretch (basic and acidic residues) spans Tyr-711 to Pro-725. The tract at residues Tyr-711–Asn-743 is disordered. Residues Gly-723 to Asn-743 form an EBM motif; may mediate interaction with the EJC region.

In terms of assembly, component of mRNA stress granules. Interacts with FMR1, FXR1, FXR2, EWSR1, FUS, SERBP1, EEF1A1 and DDX3X or DDX3Y, and with the small nuclear ribonucleoprotein-associated proteins SNRPB and SNRPN. Interacts with 'Lys-48'-linked tetra-ubiquitin, but not with monoubiquitin or 'Lys-63'-linked ubiquitin chains. May interact with the exon junction complex (EJC) composed at least of CASC3, EIF4A3, MAGOH and RBM8A. Interacts with POLR2A (via the C-terminal domain (CTD)).

Its subcellular location is the cytoplasm. It is found in the nucleus. In terms of biological role, scaffolding protein that specifically recognizes and binds dimethylarginine-containing proteins. Plays a role in the regulation of translation of target mRNAs by binding Arg/Gly-rich motifs (GAR) in dimethylarginine-containing proteins. In nucleus, acts as a coactivator: recognizes and binds asymmetric dimethylation on the core histone tails associated with transcriptional activation (H3R17me2a and H4R3me2a) and recruits proteins at these arginine-methylated loci. In cytoplasm, acts as an antiviral factor that participates in the assembly of stress granules together with G3BP1. In Mus musculus (Mouse), this protein is Tudor domain-containing protein 3 (Tdrd3).